Consider the following 80-residue polypeptide: Exodeoxyribonuclease 7 small subunit (80 aa).

The protein belongs to the XseB family. As to quaternary structure, heterooligomer composed of large and small subunits.

The protein localises to the cytoplasm. The catalysed reaction is Exonucleolytic cleavage in either 5'- to 3'- or 3'- to 5'-direction to yield nucleoside 5'-phosphates.. In terms of biological role, bidirectionally degrades single-stranded DNA into large acid-insoluble oligonucleotides, which are then degraded further into small acid-soluble oligonucleotides. The sequence is that of Exodeoxyribonuclease 7 small subunit from Enterobacter sp. (strain 638).